A 236-amino-acid chain; its full sequence is Rho-related GTP-binding protein RhoV (236 aa).

The segment at 1 to 27 (MPPRELSEAESSPLRSPTPPPGRGSAS) is disordered. S25 carries the post-translational modification Phosphoserine. Residues 38 to 45 (GDGAVGKS), 85 to 89 (DTAGQ), and 143 to 146 (TQAD) contribute to the GTP site. Residue C234 is the site of S-palmitoyl cysteine attachment.

It belongs to the small GTPase superfamily. Rho family. As to quaternary structure, interacts with PAK2. Mg(2+) is required as a cofactor.

It localises to the cell membrane. Its subcellular location is the endosome membrane. Functionally, plays a role in the control of the actin cytoskeleton via activation of the JNK pathway. The chain is Rho-related GTP-binding protein RhoV from Bos taurus (Bovine).